The following is a 211-amino-acid chain: ATP phosphoribosyltransferase (211 aa).

It belongs to the ATP phosphoribosyltransferase family. Short subfamily. In terms of assembly, heteromultimer composed of HisG and HisZ subunits.

It is found in the cytoplasm. The catalysed reaction is 1-(5-phospho-beta-D-ribosyl)-ATP + diphosphate = 5-phospho-alpha-D-ribose 1-diphosphate + ATP. It functions in the pathway amino-acid biosynthesis; L-histidine biosynthesis; L-histidine from 5-phospho-alpha-D-ribose 1-diphosphate: step 1/9. In terms of biological role, catalyzes the condensation of ATP and 5-phosphoribose 1-diphosphate to form N'-(5'-phosphoribosyl)-ATP (PR-ATP). Has a crucial role in the pathway because the rate of histidine biosynthesis seems to be controlled primarily by regulation of HisG enzymatic activity. The sequence is that of ATP phosphoribosyltransferase from Bacillus cereus (strain ATCC 10987 / NRS 248).